The chain runs to 663 residues: Probable methylenetetrahydrofolate reductase (NADPH) (663 aa).

Glu-76 serves as the catalytic Proton donor/acceptor. NAD(+) contacts are provided by residues 76-81 (EFFPPR) and 107-108 (TW). Thr-107 bears the Phosphothreonine mark. FAD-binding positions include 107-108 (TW), His-141, 171-173 (RGD), 187-188 (RA), Tyr-210, 214-217 (HPQA), Asp-223, and Lys-230. Asp-173 provides a ligand contact to substrate. Residues Gln-241, Tyr-334, and Arg-338 each contribute to the substrate site. A Phosphoserine modification is found at Ser-408. At Thr-465 the chain carries Phosphothreonine. S-adenosyl-L-methionine contacts are provided by residues 477 to 480 (QPET), 497 to 501 (TVNSQ), Thr-578, and Thr-591.

The protein belongs to the methylenetetrahydrofolate reductase family. Requires FAD as cofactor.

The enzyme catalyses (6S)-5-methyl-5,6,7,8-tetrahydrofolate + NADP(+) = (6R)-5,10-methylene-5,6,7,8-tetrahydrofolate + NADPH + H(+). The protein operates within one-carbon metabolism; tetrahydrofolate interconversion. This Caenorhabditis elegans protein is Probable methylenetetrahydrofolate reductase (NADPH).